We begin with the raw amino-acid sequence, 949 residues long: ATPase 6, plasma membrane-type (949 aa).

Residues Met-1–Phe-64 lie on the Cytoplasmic side of the membrane. The helical transmembrane segment at Leu-65–Ile-84 threads the bilayer. Residues Val-85–Trp-96 lie on the Extracellular side of the membrane. Residues Gln-97–Glu-117 form a helical membrane-spanning segment. The Cytoplasmic segment spans residues Asn-118 to Ile-246. The chain crosses the membrane as a helical span at residues Gly-247 to Pro-267. Residues Ile-268–Gly-276 lie on the Extracellular side of the membrane. A helical transmembrane segment spans residues Ile-277–Thr-294. Over Val-295–Lys-645 the chain is Cytoplasmic. Residue Asp-332 is the 4-aspartylphosphate intermediate of the active site. Residues Asp-590 and Asp-594 each contribute to the Mg(2+) site. The chain crosses the membrane as a helical span at residues Asn-646 to Leu-667. Topologically, residues Ile-668 to Asp-672 are extracellular. The chain crosses the membrane as a helical span at residues Phe-673 to Asp-695. The Cytoplasmic segment spans residues Arg-696–Ile-711. The chain crosses the membrane as a helical span at residues Phe-712–Leu-732. The Extracellular segment spans residues Ala-733–Glu-753. The helical transmembrane segment at Glu-754 to Thr-774 threads the bilayer. The Cytoplasmic segment spans residues Arg-775–Gly-786. The helical transmembrane segment at Leu-787–Ala-807 threads the bilayer. The Extracellular segment spans residues His-808 to Lys-815. Residues Gly-816–Leu-836 form a helical membrane-spanning segment. The Cytoplasmic segment spans residues Asp-837–Val-949. At Thr-883 the chain carries Phosphothreonine. Ser-931 carries the post-translational modification Phosphoserine. Residues Tyr-947 to Val-949 form an interaction with 14-3-3 proteins region. Thr-948 carries the post-translational modification Phosphothreonine.

The protein belongs to the cation transport ATPase (P-type) (TC 3.A.3) family. Type IIIA subfamily. As to quaternary structure, binds to 14-3-3 proteins. The binding is induced by phosphorylation of Thr-948. Binding to 14-3-3 proteins activates the H(+)-ATPase. As to expression, expressed in guard cells.

The protein localises to the membrane. The catalysed reaction is ATP + H2O + H(+)(in) = ADP + phosphate + 2 H(+)(out). In terms of biological role, the plasma membrane H(+) ATPase of plants and fungi generates a proton gradient that drives the active transport of nutrients by H(+)-symport. The resulting external acidification and/or internal alkinization may mediate growth responses. The protein is ATPase 6, plasma membrane-type (AHA6) of Arabidopsis thaliana (Mouse-ear cress).